Consider the following 126-residue polypeptide: Large ribosomal subunit protein bL17 (126 aa).

This sequence belongs to the bacterial ribosomal protein bL17 family. In terms of assembly, part of the 50S ribosomal subunit. Contacts protein L32.

The sequence is that of Large ribosomal subunit protein bL17 from Coxiella burnetii (strain CbuG_Q212) (Coxiella burnetii (strain Q212)).